We begin with the raw amino-acid sequence, 420 residues long: Glycogen synthase kinase-3 beta (420 aa).

Polar residues predominate over residues 1-22 (MSGRPRTTSFAESCKPVQQPSA). Residues 1 to 53 (MSGRPRTTSFAESCKPVQQPSAFGSMKVSRDKDGSKVTTVVATPGQGPDRPQE) are disordered. Serine 9 is subject to Phosphoserine; by PKB/AKT1, RPS6KA3 and SGK3. Cysteine 14 carries S-palmitoyl cysteine lipidation. One can recognise a Protein kinase domain in the interval 56-340 (YTDTKVIGNG…PLEACAHSFF (285 aa)). ATP contacts are provided by residues 62-70 (IGNGSFGVV) and lysine 85. Catalysis depends on aspartate 181, which acts as the Proton acceptor. Position 216 is a phosphotyrosine (tyrosine 216). The disordered stretch occupies residues 385-420 (QAAASPPANATAASDTNAGDRGQTNNAASASASNST). 2 stretches are compositionally biased toward low complexity: residues 386–401 (AAAS…SDTN) and 409–420 (NNAASASASNST). A Phosphoserine modification is found at serine 389.

This sequence belongs to the protein kinase superfamily. CMGC Ser/Thr protein kinase family. GSK-3 subfamily. As to quaternary structure, monomer. Interacts with DAB2IP (via C2 domain); the interaction stimulates GSK3B kinase activation. Interacts (via C2 domain) with PPP2CA. Interacts with ARRB2, AXIN1, CABYR, DISC1, MMP2, MUC1, NIN, PRUNE1 and ZBED3. Interacts with AXIN1; the interaction mediates hyperphosphorylation of CTNNB1 leading to its ubiquitination and destruction. Interacts with and phosphorylates SNAI1. Interacts with DNM1L (via a C-terminal domain). Found in a complex composed of MACF1, APC, AXIN1, CTNNB1 and GSK3B. Interacts with SGK3. Interacts with the CLOCK-BMAL1 heterodimer. Interacts with the BMAL1. Interacts with CTNND2. The complex composed, at least, of APC, CTNNB1 and GSK3B interacts with JPT1; the interaction requires the inactive form of GSK3B (phosphorylated at 'Ser-9'). Forms a complex composed of PRKAR2A or PRKAR2B, GSK3B and GSKIP through GSKIP interaction; facilitates PKA-induced phosphorylation and regulates GSK3B activity. Interacts with GSKIP. Interacts with GID8. Interacts with PIWIL2. Interacts with LMBR1L. Interacts with DDX3X. Interacts with BIRC2. Interacts with TNFRSF10B; TNFRSF10B stimulation inhibits GSK3B kinase activity. Found in a complex with SLC39A6, SLC39A10 and with GSK3B that controls NCAM1 phosphorylation. Interacts with PKP3 (via ARM repeats); the interaction may be involved in PKP3 protein degradation. Phosphorylated by AKT1 and ILK1. Upon insulin-mediated signaling, the activated PKB/AKT1 and RPS6KA3 protein kinases phosphorylate and deactivate GSK3B, resulting in the dephosphorylation and activation of GYS1. Activated by phosphorylation at Tyr-216. Inactivated by phosphorylation at Ser-9. Phosphorylated in a circadian manner in the hippocampus. In terms of processing, mono-ADP-ribosylation by PARP10 negatively regulates kinase activity. Post-translationally, palmitoylated. Palmitoylation by ZDHHC4 prevents AKT1-mediated phosphorylation.

It localises to the cytoplasm. It is found in the nucleus. Its subcellular location is the membrane. The protein localises to the cell membrane. It carries out the reaction L-seryl-[tau protein] + ATP = O-phospho-L-seryl-[tau protein] + ADP + H(+). The catalysed reaction is L-threonyl-[tau protein] + ATP = O-phospho-L-threonyl-[tau protein] + ADP + H(+). The enzyme catalyses L-seryl-[protein] + ATP = O-phospho-L-seryl-[protein] + ADP + H(+). It catalyses the reaction L-threonyl-[protein] + ATP = O-phospho-L-threonyl-[protein] + ADP + H(+). Activated by phosphorylation at Tyr-216. In response to insulin, inhibited by phosphorylation at Ser-9 by PKB/AKT1; phosphorylation at this site causes a conformational change, preventing access of substrates to the active site. Inhibited by IL22 treatment which also triggers phosphorylation at Ser-9, promoting inactivation. Inhibited by lithium. Constitutively active protein kinase that acts as a negative regulator in the hormonal control of glucose homeostasis, Wnt signaling and regulation of transcription factors and microtubules, by phosphorylating and inactivating glycogen synthase (GYS1 or GYS2), EIF2B, CTNNB1/beta-catenin, APC, AXIN1, DPYSL2/CRMP2, JUN, NFATC1/NFATC, MAPT/TAU and MACF1. Requires primed phosphorylation of the majority of its substrates. In skeletal muscle, contributes to insulin regulation of glycogen synthesis by phosphorylating and inhibiting GYS1 activity and hence glycogen synthesis. May also mediate the development of insulin resistance by regulating activation of transcription factors. Regulates protein synthesis by controlling the activity of initiation factor 2B (EIF2BE/EIF2B5) in the same manner as glycogen synthase. In Wnt signaling, GSK3B forms a multimeric complex with APC, AXIN1 and CTNNB1/beta-catenin and phosphorylates the N-terminus of CTNNB1 leading to its degradation mediated by ubiquitin/proteasomes. Phosphorylates JUN at sites proximal to its DNA-binding domain, thereby reducing its affinity for DNA. Phosphorylates NFATC1/NFATC on conserved serine residues promoting NFATC1/NFATC nuclear export, shutting off NFATC1/NFATC gene regulation, and thereby opposing the action of calcineurin. Phosphorylates MAPT/TAU on 'Thr-548', decreasing significantly MAPT/TAU ability to bind and stabilize microtubules. MAPT/TAU is the principal component of neurofibrillary tangles in Alzheimer disease. Plays an important role in ERBB2-dependent stabilization of microtubules at the cell cortex. Phosphorylates MACF1, inhibiting its binding to microtubules which is critical for its role in bulge stem cell migration and skin wound repair. Probably regulates NF-kappa-B (NFKB1) at the transcriptional level and is required for the NF-kappa-B-mediated anti-apoptotic response to TNF-alpha (TNF/TNFA). Negatively regulates replication in pancreatic beta-cells, resulting in apoptosis, loss of beta-cells and diabetes. Through phosphorylation of the anti-apoptotic protein MCL1, may control cell apoptosis in response to growth factors deprivation. Phosphorylates MUC1 in breast cancer cells, decreasing the interaction of MUC1 with CTNNB1/beta-catenin. Is necessary for the establishment of neuronal polarity and axon outgrowth. Phosphorylates MARK2, leading to inhibition of its activity. Phosphorylates SIK1 at 'Thr-182', leading to sustainment of its activity. Phosphorylates ZC3HAV1 which enhances its antiviral activity. Phosphorylates SNAI1, leading to its ubiquitination and proteasomal degradation. Phosphorylates SFPQ at 'Thr-687' upon T-cell activation. Phosphorylates NR1D1 st 'Ser-55' and 'Ser-59' and stabilizes it by protecting it from proteasomal degradation. Regulates the circadian clock via phosphorylation of the major clock components including BMAL1, CLOCK and PER2. Phosphorylates CLOCK AT 'Ser-427' and targets it for proteasomal degradation. Phosphorylates BMAL1 at 'Ser-17' and 'Ser-21' and primes it for ubiquitination and proteasomal degradation. Phosphorylates FBXL2 at 'Thr-404' and primes it for ubiquitination by the SCF(FBXO3) complex and proteasomal degradation. Phosphorylates OGT at 'Ser-3' or 'Ser-4' which positively regulates its activity. Phosphorylates MYCN in neuroblastoma cells which may promote its degradation. Regulates the circadian rhythmicity of hippocampal long-term potentiation and BMAL1 and PER2 expression. Acts as a regulator of autophagy by mediating phosphorylation of KAT5/TIP60 under starvation conditions, activating KAT5/TIP60 acetyltransferase activity and promoting acetylation of key autophagy regulators, such as ULK1 and RUBCNL/Pacer. Negatively regulates extrinsic apoptotic signaling pathway via death domain receptors. Promotes the formation of an anti-apoptotic complex, made of DDX3X, BRIC2 and GSK3B, at death receptors, including TNFRSF10B. The anti-apoptotic function is most effective with weak apoptotic signals and can be overcome by stronger stimulation. Phosphorylates E2F1, promoting the interaction between E2F1 and USP11, stabilizing E2F1 and promoting its activity. Phosphorylates mTORC2 complex component RICTOR at 'Ser-1235' in response to endoplasmic stress, inhibiting mTORC2. Phosphorylates FXR1, promoting FXR1 ubiquitination by the SCF(FBXO4) complex and FXR1 degradation by the proteasome. Phosphorylates interleukin-22 receptor subunit IL22RA1, preventing its proteasomal degradation. This chain is Glycogen synthase kinase-3 beta, found in Rattus norvegicus (Rat).